A 386-amino-acid chain; its full sequence is Succinate--CoA ligase [ADP-forming] subunit beta (386 aa).

One can recognise an ATP-grasp domain in the interval 9 to 244 (KAVLRSYGVS…LDEEDSKEIE (236 aa)). ATP contacts are provided by residues Lys46, 53–55 (GRG), Glu99, Cys102, and Glu107. 2 residues coordinate Mg(2+): Asn199 and Asp213. Residues Asn264 and 321–323 (GIM) each bind substrate.

It belongs to the succinate/malate CoA ligase beta subunit family. In terms of assembly, heterotetramer of two alpha and two beta subunits. Mg(2+) serves as cofactor.

It carries out the reaction succinate + ATP + CoA = succinyl-CoA + ADP + phosphate. The enzyme catalyses GTP + succinate + CoA = succinyl-CoA + GDP + phosphate. It functions in the pathway carbohydrate metabolism; tricarboxylic acid cycle; succinate from succinyl-CoA (ligase route): step 1/1. Its function is as follows. Succinyl-CoA synthetase functions in the citric acid cycle (TCA), coupling the hydrolysis of succinyl-CoA to the synthesis of either ATP or GTP and thus represents the only step of substrate-level phosphorylation in the TCA. The beta subunit provides nucleotide specificity of the enzyme and binds the substrate succinate, while the binding sites for coenzyme A and phosphate are found in the alpha subunit. The chain is Succinate--CoA ligase [ADP-forming] subunit beta from Bacillus cereus (strain ATCC 14579 / DSM 31 / CCUG 7414 / JCM 2152 / NBRC 15305 / NCIMB 9373 / NCTC 2599 / NRRL B-3711).